Here is a 379-residue protein sequence, read N- to C-terminus: Alanine racemase (379 aa).

Lys37 acts as the Proton acceptor; specific for D-alanine in catalysis. At Lys37 the chain carries N6-(pyridoxal phosphate)lysine. Residue Arg137 participates in substrate binding. Residue Tyr269 is the Proton acceptor; specific for L-alanine of the active site. Residue Met317 coordinates substrate.

The protein belongs to the alanine racemase family. The cofactor is pyridoxal 5'-phosphate.

It carries out the reaction L-alanine = D-alanine. Its pathway is amino-acid biosynthesis; D-alanine biosynthesis; D-alanine from L-alanine: step 1/1. Functionally, catalyzes the interconversion of L-alanine and D-alanine. May also act on other amino acids. The sequence is that of Alanine racemase (alr) from Citrifermentans bemidjiense (strain ATCC BAA-1014 / DSM 16622 / JCM 12645 / Bem) (Geobacter bemidjiensis).